A 203-amino-acid polypeptide reads, in one-letter code: Large ribosomal subunit protein uL13 (203 aa).

Alanine 2 carries the N-acetylalanine modification. Arginine 59 carries the post-translational modification Citrulline. Serine 77 carries the phosphoserine modification. Arginine 140 is modified (citrulline). Position 191 is an N6-acetyllysine (lysine 191).

The protein belongs to the universal ribosomal protein uL13 family. In terms of assembly, component of the 60S ribosome. Component of the GAIT complex. Interacts with EIF4G1. In terms of processing, phosphorylation at Ser-77 upon interferon-gamma treatment in macrophages involves a DAPK1-DAPK3 kinase cascade and is causing release from the ribosome, association with the GAIT complex and subsequent involvement in transcript-selective translation inhibition. Post-translationally, citrullinated by PADI4.

Its subcellular location is the cytoplasm. Functionally, associated with ribosomes but is not required for canonical ribosome function and has extra-ribosomal functions. Component of the GAIT (gamma interferon-activated inhibitor of translation) complex which mediates interferon-gamma-induced transcript-selective translation inhibition in inflammation processes. Upon interferon-gamma activation and subsequent phosphorylation dissociates from the ribosome and assembles into the GAIT complex which binds to stem loop-containing GAIT elements in the 3'-UTR of diverse inflammatory mRNAs (such as ceruplasmin) and suppresses their translation. In the GAIT complex interacts with m7G cap-bound eIF4G at or near the eIF3-binding site and blocks the recruitment of the 43S ribosomal complex. Involved in methylation of rRNA. The protein is Large ribosomal subunit protein uL13 (Rpl13a) of Rattus norvegicus (Rat).